A 214-amino-acid polypeptide reads, in one-letter code: Thymidylate kinase (214 aa).

15–22 (GLEGAGKT) serves as a coordination point for ATP.

This sequence belongs to the thymidylate kinase family.

It catalyses the reaction dTMP + ATP = dTDP + ADP. In terms of biological role, phosphorylation of dTMP to form dTDP in both de novo and salvage pathways of dTTP synthesis. The protein is Thymidylate kinase of Haemophilus ducreyi (strain 35000HP / ATCC 700724).